The chain runs to 442 residues: Citrate transporter CitP (442 aa).

Helical transmembrane passes span 27 to 47 (ISGI…IAIS), 59 to 79 (IFAL…LPIF), 83 to 103 (LGGG…TNVI), 114 to 134 (FING…SSLF), 151 to 171 (VAFI…VIIG), 177 to 197 (AILY…IVPL), 209 to 229 (SAGI…LAII), 267 to 287 (YVQL…GTML), 293 to 313 (GINA…FGLL), 321 to 341 (VIMF…AGVG), 349 to 369 (VLLA…IVAI), 387 to 409 (AAIT…VLAA), and 421 to 441 (MGNR…VTFM).

This sequence belongs to the 2-hydroxycarboxylate transporter (2-HCT) (TC 2.A.24) family.

The protein resides in the cell membrane. The enzyme catalyses (R)-lactate(in) + citrate(out) = (R)-lactate(out) + citrate(in). It catalyses the reaction (S)-lactate(in) + citrate(out) = (S)-lactate(out) + citrate(in). It carries out the reaction citrate(in) + H(+)(in) = citrate(out) + H(+)(out). With respect to regulation, the transport of citrate is unaffected by the presence of citrate in the growth media. Its function is as follows. Secondary transporter involved in citrate metabolism. During cometabolism of citrate and glucose, catalyzes the uptake of divalent citrate into the cell coupled to the exit of monovalent lactate, the end product of glycolysis in L.lactis. The citrate/lactate exchange is electrogenic and results in the generation of a membrane potential. Plays an important role in resistance against lactate toxicity at low pH. In the absence of glucose, i.e. when no lactate is produced, CitP catalyzes the uptake of citrate in exchange with the citrate metabolism intermediates pyruvate and alpha-acetolactate, and the end product acetate. In the absence of glucose, CitP can also catalyze the proton-dependent transport of citrate. In vitro, shows a broad substrate specificity. Can transport a wide variety of mono- and dicarboxylates of the form X-CR(2)-COO(-), where X represents OH (2-hydroxy acid), O (2-keto acid), or H (acid) and R groups differ in size, hydrophobicity and composition. Many of the substrates are intermediates or products of amino acid metabolism, suggesting that CitP may have a broader physiological function than its role in citrate metabolism. The chain is Citrate transporter CitP from Lactococcus lactis subsp. lactis (Streptococcus lactis).